A 540-amino-acid polypeptide reads, in one-letter code: O-phosphoserine--tRNA(Cys) ligase (540 aa).

Residues H188–T190, S233–S235, Y275–Y276, and N319 each bind substrate.

It belongs to the class-II aminoacyl-tRNA synthetase family. O-phosphoseryl-tRNA(Cys) synthetase subfamily. As to quaternary structure, homotetramer. Interacts with SepCysS.

It catalyses the reaction tRNA(Cys) + O-phospho-L-serine + ATP = O-phospho-L-seryl-tRNA(Cys) + AMP + diphosphate. In terms of biological role, catalyzes the attachment of O-phosphoserine (Sep) to tRNA(Cys). This chain is O-phosphoserine--tRNA(Cys) ligase, found in Methanococcus aeolicus (strain ATCC BAA-1280 / DSM 17508 / OCM 812 / Nankai-3).